A 736-amino-acid polypeptide reads, in one-letter code: MTVPPGKDPAPAPPGMLPAPEIAAILSGTHSNPFAVLGVHAAGKTYVARCFVPGAETVIAETLSGKELGTLERRDEAGFFEGPVALRKEQPIRYRARNDGGEWTVIDPYSFGPVLGPMDDYYIREGSHLRLFDKMGAHPIRHDGAEGFHFAVWAPNARRVSVVGSFNDWDGRRHVMRLRVDTGIWEIFIPGVPVGTPYKYEIVDSNGTLLPLKADPFARRSELRPDTASMTADEIAQNWEDEAHRRHWAEIDPRRQPISIYEVHAASWQRRDNGDMLTWDELAERLIPYCVDMGFTHIEFLPISEYPYDPSWGYQTTGLYAPTARFGEPEGFARFVNGCHKVGIGVILDWVPAHFPTDEHGLRWFDGTALYEHADPRQGFHPDWNTAIYNFGRQEVVAFLVNNALYWAEKFHVDGLRVDAVASMLYLDYSRKHGEWVPNEYGGNENLEAVRFLQTMNTRIYGIHQGVLTIAEESTSWPKVSHPVHAGGLGFGFKWNMGFMHDTLQYLSREPVHRKFHHNDMTFGLLYAFSENFVLPLSHDEVVHGKGSLIAKMAGDDWQKFANLRAYYGFMWGYPGKKLLFMGQEFAQWREWSEDRGLDWNLLEYNLHEGMRRLVRDLNGTYRSKPALHARDCEGDGFEWLIADDRENSVFAWLRKAPGEKLVAVVTNFTPVYREHYDIPLPVAGRWKEVLNTDAEIYGGSGKGNGGAVHAEKRANGETIATITLPPLATLMLEQD.

Asp-419 (nucleophile) is an active-site residue. The active-site Proton donor is the Glu-472.

The protein belongs to the glycosyl hydrolase 13 family. GlgB subfamily. In terms of assembly, monomer.

It carries out the reaction Transfers a segment of a (1-&gt;4)-alpha-D-glucan chain to a primary hydroxy group in a similar glucan chain.. Its pathway is glycan biosynthesis; glycogen biosynthesis. In terms of biological role, catalyzes the formation of the alpha-1,6-glucosidic linkages in glycogen by scission of a 1,4-alpha-linked oligosaccharide from growing alpha-1,4-glucan chains and the subsequent attachment of the oligosaccharide to the alpha-1,6 position. The polypeptide is 1,4-alpha-glucan branching enzyme GlgB (Rhizobium meliloti (strain 1021) (Ensifer meliloti)).